A 417-amino-acid chain; its full sequence is Phosphoglycerate kinase (417 aa).

(2R)-3-phosphoglycerate is bound by residues valine 23, aspartate 24, phenylalanine 25, asparagine 26, glutamine 39, arginine 40, serine 63, histidine 64, glycine 66, arginine 67, leucine 122, arginine 123, histidine 170, and arginine 171. Serine 203 is modified (phosphoserine). Glycine 214 is a binding site for ADP. Residue glycine 214 coordinates CDP. The AMP site is built by alanine 215 and lysine 216. Alanine 215 is an ATP binding site. Alanine 215 serves as a coordination point for Mg(2+). Aspartate 219 is a CDP binding site. Aspartate 219 provides a ligand contact to Mg(2+). An AMP-binding site is contributed by lysine 220. Lysine 220 contacts ATP. Glycine 238 serves as a coordination point for ADP. Glycine 238 contacts CDP. Residues alanine 239 and glycine 313 each contribute to the AMP site. The ATP site is built by alanine 239 and glycine 313. CDP contacts are provided by glycine 338 and phenylalanine 343. Phenylalanine 343 provides a ligand contact to ADP. Position 344 (glutamate 344) interacts with AMP. ATP-binding residues include glutamate 344, aspartate 375, and threonine 376. Aspartate 375 is a Mg(2+) binding site.

It belongs to the phosphoglycerate kinase family. Monomer. Mg(2+) serves as cofactor. Post-translationally, dephosphorylated by PTC1 and PTC2 at Ser-203; the protein is cytosolic when dephosphorylated.

The protein resides in the cytoplasm. It is found in the cytosol. Its subcellular location is the mitochondrion. The enzyme catalyses (2R)-3-phosphoglycerate + ATP = (2R)-3-phospho-glyceroyl phosphate + ADP. The protein operates within carbohydrate degradation; glycolysis; pyruvate from D-glyceraldehyde 3-phosphate: step 2/5. Its function is as follows. Catalyzes one of the two ATP producing reactions in the glycolytic pathway via the reversible conversion of 1,3-diphosphoglycerate to 3-phosphoglycerate. Both L- and D- forms of purine and pyrimidine nucleotides can be used as substrates, but the activity is much lower on pyrimidines. Negatively regulates the biosynthesis of acetyl-CoA from pyruvate in the mitochondrion and consequently also attenuates aflatoxin production. The sequence is that of Phosphoglycerate kinase from Aspergillus flavus (strain ATCC 200026 / FGSC A1120 / IAM 13836 / NRRL 3357 / JCM 12722 / SRRC 167).